The chain runs to 263 residues: Phosphatidylglycerol--prolipoprotein diacylglyceryl transferase (263 aa).

4 consecutive transmembrane segments (helical) span residues 6 to 26, 50 to 70, 85 to 105, and 112 to 132; these read VIFS…VLGI, LLTA…VLIY, TWEG…AVII, and IPIF…LLLG. Arg-133 is an a 1,2-diacyl-sn-glycero-3-phospho-(1'-sn-glycerol) binding site. The next 3 helical transmembrane spans lie at 169–189, 197–217, and 233–253; these read LYEA…LFYL, GATT…VEFF, and MGQL…LGAL.

Belongs to the Lgt family.

The protein localises to the cell membrane. The catalysed reaction is L-cysteinyl-[prolipoprotein] + a 1,2-diacyl-sn-glycero-3-phospho-(1'-sn-glycerol) = an S-1,2-diacyl-sn-glyceryl-L-cysteinyl-[prolipoprotein] + sn-glycerol 1-phosphate + H(+). The protein operates within protein modification; lipoprotein biosynthesis (diacylglyceryl transfer). Its function is as follows. Catalyzes the transfer of the diacylglyceryl group from phosphatidylglycerol to the sulfhydryl group of the N-terminal cysteine of a prolipoprotein, the first step in the formation of mature lipoproteins. This chain is Phosphatidylglycerol--prolipoprotein diacylglyceryl transferase, found in Wolbachia pipientis subsp. Culex pipiens (strain wPip).